The sequence spans 36 residues: Alpha-amylase inhibitor AI-3688 (36 aa).

Cys9 and Cys25 form a disulfide bridge.

Functionally, inhibits mammalian alpha-amylases specifically but has no action on plant and microbial alpha-amylases. The polypeptide is Alpha-amylase inhibitor AI-3688 (Kitasatospora aureofaciens (Streptomyces aureofaciens)).